The chain runs to 178 residues: ATP-dependent protease subunit HslV (178 aa).

Thr-7 is an active-site residue. Na(+) contacts are provided by Gly-162, Cys-165, and Thr-168.

This sequence belongs to the peptidase T1B family. HslV subfamily. In terms of assembly, a double ring-shaped homohexamer of HslV is capped on each side by a ring-shaped HslU homohexamer. The assembly of the HslU/HslV complex is dependent on binding of ATP.

The protein localises to the cytoplasm. The catalysed reaction is ATP-dependent cleavage of peptide bonds with broad specificity.. Allosterically activated by HslU binding. Functionally, protease subunit of a proteasome-like degradation complex believed to be a general protein degrading machinery. The protein is ATP-dependent protease subunit HslV of Herminiimonas arsenicoxydans.